Reading from the N-terminus, the 175-residue chain is Crossover junction endodeoxyribonuclease RuvC (175 aa).

Residues Asp11, Glu71, and His143 contribute to the active site. The Mg(2+) site is built by Asp11, Glu71, and His143.

Belongs to the RuvC family. Homodimer which binds Holliday junction (HJ) DNA. The HJ becomes 2-fold symmetrical on binding to RuvC with unstacked arms; it has a different conformation from HJ DNA in complex with RuvA. In the full resolvosome a probable DNA-RuvA(4)-RuvB(12)-RuvC(2) complex forms which resolves the HJ. Requires Mg(2+) as cofactor.

The protein localises to the cytoplasm. The catalysed reaction is Endonucleolytic cleavage at a junction such as a reciprocal single-stranded crossover between two homologous DNA duplexes (Holliday junction).. The RuvA-RuvB-RuvC complex processes Holliday junction (HJ) DNA during genetic recombination and DNA repair. Endonuclease that resolves HJ intermediates. Cleaves cruciform DNA by making single-stranded nicks across the HJ at symmetrical positions within the homologous arms, yielding a 5'-phosphate and a 3'-hydroxyl group; requires a central core of homology in the junction. The consensus cleavage sequence is 5'-(A/T)TT(C/G)-3'. Cleavage occurs on the 3'-side of the TT dinucleotide at the point of strand exchange. HJ branch migration catalyzed by RuvA-RuvB allows RuvC to scan DNA until it finds its consensus sequence, where it cleaves and resolves the cruciform DNA. The polypeptide is Crossover junction endodeoxyribonuclease RuvC (Parvibaculum lavamentivorans (strain DS-1 / DSM 13023 / NCIMB 13966)).